A 335-amino-acid polypeptide reads, in one-letter code: NADH-quinone oxidoreductase subunit H (335 aa).

8 consecutive transmembrane segments (helical) span residues Ile12–Leu32, Val81–Ile101, Ile114–Gly134, Val154–Phe174, Leu187–Val207, Phe238–Phe258, Ser270–Leu290, and Trp307–Leu327.

Belongs to the complex I subunit 1 family. NDH-1 is composed of 13 different subunits. Subunits NuoA, H, J, K, L, M, N constitute the membrane sector of the complex.

The protein localises to the cell inner membrane. It catalyses the reaction a quinone + NADH + 5 H(+)(in) = a quinol + NAD(+) + 4 H(+)(out). Its function is as follows. NDH-1 shuttles electrons from NADH, via FMN and iron-sulfur (Fe-S) centers, to quinones in the respiratory chain. The immediate electron acceptor for the enzyme in this species is believed to be ubiquinone. Couples the redox reaction to proton translocation (for every two electrons transferred, four hydrogen ions are translocated across the cytoplasmic membrane), and thus conserves the redox energy in a proton gradient. This subunit may bind ubiquinone. This Pseudomonas syringae pv. syringae (strain B728a) protein is NADH-quinone oxidoreductase subunit H.